Consider the following 1340-residue polypeptide: Iron-sulfur cluster assembly protein SufD (1340 aa).

The segment covering 477 to 487 (NSLKHNNNNTK) has biased composition (low complexity). Disordered regions lie at residues 477 to 498 (NSLKHNNNNTKPSSQKYEERSS), 723 to 743 (HGKDNTQHDDKNNPNFRNYLN), 765 to 794 (NVSTDEKRETQYDVKGNNPDTETNNEQSTV), 835 to 865 (EKNESNEGKGNDLDATEQRENEQVGPNGEKK), and 992 to 1055 (NIPT…NNIQ). Basic and acidic residues predominate over residues 723-734 (HGKDNTQHDDKN). Positions 782 to 794 (NPDTETNNEQSTV) are enriched in polar residues. A compositionally biased stretch (polar residues) spans 1022-1037 (DNLLQNDQATNSNVEI).

It belongs to the iron-sulfur cluster assembly SufBD family. As to quaternary structure, component of a complex composed of SufB, SufC and SufD in a stoichiometric ratio of 1:2:1. Interacts with SufB. Interacts with SufC; the interaction enhances the ATPase activity of SufC.

It localises to the plastid. The protein resides in the apicoplast. It functions in the pathway cofactor biosynthesis; iron-sulfur cluster biosynthesis. Participates in the sulfur mobilization (SUF) pathway for iron-sulfur (Fe-S) cluster biogenesis. As part of a complex consisting of SufB-SufC(2)-SufD, involved in assembly of [4Fe-4S] clusters. Enhances the ATPase activity of SufC. This is Iron-sulfur cluster assembly protein SufD from Plasmodium berghei (strain Anka).